The following is a 314-amino-acid chain: MFSINPLENLKVYISSRPPLVVFMISVSAMAIAFLTLGYFFKIKEIKSPEMAEDWNTFLLRFNDLDLCVSENETLKHLTNDTTTPESTMTSGQARASTQSPQALEDSGPVNISVSITLTLDPLKPFGGYSRNVTHLYSTILGHQIGLSGREAHEEINITFTLPTAWSSDDCALHGHCEQVVFTACMTLTASPGVFPVTVQPPHCVPDTYSNATLWYKIFTTARDANTKYAQDYNPFWCYKGAIGKVYHALNPKLTVIVPDDDRSLINLHLMHTSYFLFVMVITMFCYAVIKGRPSKLRQSNPEFCPEKVALAEA.

The helical transmembrane segment at 21 to 41 (VVFMISVSAMAIAFLTLGYFF) threads the bilayer. Residues 78–106 (LTNDTTTPESTMTSGQARASTQSPQALED) form a disordered region. Residues 80–102 (NDTTTPESTMTSGQARASTQSPQ) are compositionally biased toward polar residues. 3 helical membrane-spanning segments follow: residues 179–199 (QVVFTACMTLTASPGVFPVTV), 236–258 (FWCYKGAIGKVYHALNPKLTVIV), and 270–290 (LMHTSYFLFVMVITMFCYAVI).

Belongs to the TMEM248 family.

The protein localises to the membrane. The sequence is that of Transmembrane protein 248 (TMEM248) from Homo sapiens (Human).